The sequence spans 463 residues: Rubisco accumulation factor 1, chloroplastic (463 aa).

Over residues 1–18 (MLSLSHPHPHPAASTTAP) the composition is skewed to low complexity. The transit peptide at 1 to 31 (MLSLSHPHPHPAASTTAPRHQRTAPVWHRRR) directs the protein to the chloroplast. The disordered stretch occupies residues 1 to 84 (MLSLSHPHPH…PFHPPPSPLP (84 aa)). Basic residues predominate over residues 19 to 33 (RHQRTAPVWHRRRAS). Positions 43–53 (PGGGSTGGRGG) are enriched in gly residues. Positions 83 to 275 (LPPSLRNLDL…SGRARVELEL (193 aa)) are N-terminal alpha-helix. A coiled-coil region spans residues 240–294 (RQSREAIDVQDRVAELERALQVVETESGRARVELELERARRKAAGEEEVDEEGEE). Positions 305–450 (VTVVRLRYGE…AEVVIVVRPP (146 aa)) are C-terminal beta sheet.

The protein belongs to the RAF family. As to quaternary structure, homotrimer. As to expression, expressed in bundle sheath.

Its subcellular location is the plastid. It localises to the chloroplast. In terms of biological role, required for assembly or stability of RuBisCO. Acts at a postchaperonin step to fold and/or assemble the large subunit (LS) into RuBisCO. In Zea mays (Maize), this protein is Rubisco accumulation factor 1, chloroplastic.